The chain runs to 396 residues: S-adenosylmethionine synthase (396 aa).

Position 16 (His-16) interacts with ATP. Asp-18 serves as a coordination point for Mg(2+). Glu-44 contributes to the K(+) binding site. Glu-57 and Gln-100 together coordinate L-methionine. The interval 100–110 (QSPDIAQGVDD) is flexible loop. ATP is bound by residues 174 to 176 (DAK), 241 to 242 (RF), Asp-250, 256 to 257 (RK), Ala-273, and Lys-277. Asp-250 contacts L-methionine. Lys-281 is a binding site for L-methionine.

The protein belongs to the AdoMet synthase family. Homotetramer; dimer of dimers. The cofactor is Mg(2+). It depends on K(+) as a cofactor.

The protein resides in the cytoplasm. The catalysed reaction is L-methionine + ATP + H2O = S-adenosyl-L-methionine + phosphate + diphosphate. It functions in the pathway amino-acid biosynthesis; S-adenosyl-L-methionine biosynthesis; S-adenosyl-L-methionine from L-methionine: step 1/1. Its function is as follows. Catalyzes the formation of S-adenosylmethionine (AdoMet) from methionine and ATP. The overall synthetic reaction is composed of two sequential steps, AdoMet formation and the subsequent tripolyphosphate hydrolysis which occurs prior to release of AdoMet from the enzyme. In Pediococcus pentosaceus (strain ATCC 25745 / CCUG 21536 / LMG 10740 / 183-1w), this protein is S-adenosylmethionine synthase.